The sequence spans 301 residues: Probable alpha-L-glutamate ligase (301 aa).

An ATP-grasp domain is found at 104–287 (LQLLSRRGIG…VAGMIIGYLE (184 aa)). Residues K141, 178–179 (EY), D187, and 211–213 (RSN) contribute to the ATP site. Residues D248, E260, and N262 each contribute to the Mg(2+) site. 3 residues coordinate Mn(2+): D248, E260, and N262.

The protein belongs to the RimK family. Requires Mg(2+) as cofactor. Mn(2+) is required as a cofactor.

The sequence is that of Probable alpha-L-glutamate ligase from Pseudomonas syringae pv. syringae (strain B728a).